The following is a 215-amino-acid chain: Protein-L-isoaspartate O-methyltransferase 1 (215 aa).

The active site involves Ser61.

Belongs to the methyltransferase superfamily. L-isoaspartyl/D-aspartyl protein methyltransferase family.

The protein resides in the cytoplasm. The catalysed reaction is [protein]-L-isoaspartate + S-adenosyl-L-methionine = [protein]-L-isoaspartate alpha-methyl ester + S-adenosyl-L-homocysteine. Its function is as follows. Catalyzes the methyl esterification of L-isoaspartyl residues in peptides and proteins that result from spontaneous decomposition of normal L-aspartyl and L-asparaginyl residues. It plays a role in the repair and/or degradation of damaged proteins. The sequence is that of Protein-L-isoaspartate O-methyltransferase 1 from Pelobacter propionicus (strain DSM 2379 / NBRC 103807 / OttBd1).